We begin with the raw amino-acid sequence, 65 residues long: Large ribosomal subunit protein bL35 (65 aa).

Belongs to the bacterial ribosomal protein bL35 family.

The chain is Large ribosomal subunit protein bL35 from Methylobacillus flagellatus (strain ATCC 51484 / DSM 6875 / VKM B-1610 / KT).